The primary structure comprises 177 residues: Large ribosomal subunit protein uL6 (177 aa).

The protein belongs to the universal ribosomal protein uL6 family. Part of the 50S ribosomal subunit.

In terms of biological role, this protein binds to the 23S rRNA, and is important in its secondary structure. It is located near the subunit interface in the base of the L7/L12 stalk, and near the tRNA binding site of the peptidyltransferase center. This Bordetella avium (strain 197N) protein is Large ribosomal subunit protein uL6.